Reading from the N-terminus, the 135-residue chain is C-type lectin LmsL (135 aa).

Intrachain disulfides connect C3–C14, C31–C131, C38–C133, and C106–C123. The C-type lectin domain maps to 10–132 (MNGLCYKIFD…CESKNAFLCQ (123 aa)). Ca(2+) contacts are provided by Q96, D98, E104, N119, and D120. Positions 96–98 (QPD) match the Galactose-binding motif.

The protein belongs to the true venom lectin family. As to quaternary structure, homodimer; disulfide-linked. Expressed by the venom gland.

Its subcellular location is the secreted. Galactose-binding protein which recognizes specific carbohydrate structures and agglutinates a variety of animal cells by binding to cell-surface glycoproteins and glycolipids. Is a calcium-dependent lectin. Shows high hemagglutinating activity, that is inhibited by lactose, galactose and inositol. The protein is C-type lectin LmsL of Lachesis stenophrys (Central American bushmaster).